A 238-amino-acid polypeptide reads, in one-letter code: Ribonuclease PH (238 aa).

Phosphate contacts are provided by residues R86 and 124–126; that span reads GTR.

It belongs to the RNase PH family. As to quaternary structure, homohexameric ring arranged as a trimer of dimers.

It carries out the reaction tRNA(n+1) + phosphate = tRNA(n) + a ribonucleoside 5'-diphosphate. Phosphorolytic 3'-5' exoribonuclease that plays an important role in tRNA 3'-end maturation. Removes nucleotide residues following the 3'-CCA terminus of tRNAs; can also add nucleotides to the ends of RNA molecules by using nucleoside diphosphates as substrates, but this may not be physiologically important. Probably plays a role in initiation of 16S rRNA degradation (leading to ribosome degradation) during starvation. This chain is Ribonuclease PH, found in Photobacterium profundum (strain SS9).